A 356-amino-acid polypeptide reads, in one-letter code: UDP-N-acetylglucosamine--N-acetylmuramyl-(pentapeptide) pyrophosphoryl-undecaprenol N-acetylglucosamine transferase (356 aa).

UDP-N-acetyl-alpha-D-glucosamine is bound by residues 12–14 (TGG), Asn124, Arg163, Ser188, Ile242, and Gln287.

The protein belongs to the glycosyltransferase 28 family. MurG subfamily.

The protein resides in the cell inner membrane. It carries out the reaction di-trans,octa-cis-undecaprenyl diphospho-N-acetyl-alpha-D-muramoyl-L-alanyl-D-glutamyl-meso-2,6-diaminopimeloyl-D-alanyl-D-alanine + UDP-N-acetyl-alpha-D-glucosamine = di-trans,octa-cis-undecaprenyl diphospho-[N-acetyl-alpha-D-glucosaminyl-(1-&gt;4)]-N-acetyl-alpha-D-muramoyl-L-alanyl-D-glutamyl-meso-2,6-diaminopimeloyl-D-alanyl-D-alanine + UDP + H(+). The protein operates within cell wall biogenesis; peptidoglycan biosynthesis. In terms of biological role, cell wall formation. Catalyzes the transfer of a GlcNAc subunit on undecaprenyl-pyrophosphoryl-MurNAc-pentapeptide (lipid intermediate I) to form undecaprenyl-pyrophosphoryl-MurNAc-(pentapeptide)GlcNAc (lipid intermediate II). This is UDP-N-acetylglucosamine--N-acetylmuramyl-(pentapeptide) pyrophosphoryl-undecaprenol N-acetylglucosamine transferase from Pseudomonas syringae pv. syringae (strain B728a).